Reading from the N-terminus, the 448-residue chain is UDP-glycosyltransferase 79B5 (448 aa).

UDP-alpha-D-glucose contacts are provided by residues Thr261, 320–322, 337–345, and 359–362; these read LEQ, HCGFGSMWE, and LADQ.

This sequence belongs to the UDP-glycosyltransferase family.

This is UDP-glycosyltransferase 79B5 (UGT79B5) from Arabidopsis thaliana (Mouse-ear cress).